Reading from the N-terminus, the 642-residue chain is Threonine--tRNA ligase (642 aa).

Positions 1–61 (MPIITLPDGS…EEDASLEIIT (61 aa)) constitute a TGS domain. The segment at 244-535 (DHRKIGKQLD…LIEEYAGFFP (292 aa)) is catalytic. 3 residues coordinate Zn(2+): Cys335, His386, and His512.

The protein belongs to the class-II aminoacyl-tRNA synthetase family. As to quaternary structure, homodimer. It depends on Zn(2+) as a cofactor.

The protein resides in the cytoplasm. The catalysed reaction is tRNA(Thr) + L-threonine + ATP = L-threonyl-tRNA(Thr) + AMP + diphosphate + H(+). Its function is as follows. Catalyzes the attachment of threonine to tRNA(Thr) in a two-step reaction: L-threonine is first activated by ATP to form Thr-AMP and then transferred to the acceptor end of tRNA(Thr). Also edits incorrectly charged L-seryl-tRNA(Thr). The chain is Threonine--tRNA ligase from Vibrio vulnificus (strain YJ016).